The chain runs to 335 residues: Ketol-acid reductoisomerase (NADP(+)) (335 aa).

Residues 1–182 (MATIIYDDET…GATRAGVYET (182 aa)) enclose the KARI N-terminal Rossmann domain. NADP(+) contacts are provided by residues 25-28 (YGSQ), arginine 48, serine 51, serine 53, and 83-86 (DEKQ). The active site involves histidine 108. Position 134 (glycine 134) interacts with NADP(+). In terms of domain architecture, KARI C-terminal knotted spans 183–328 (TFREETETDL…KQIRANIPWL (146 aa)). Mg(2+) contacts are provided by aspartate 191, glutamate 195, glutamate 227, and glutamate 231. Serine 252 is a binding site for substrate.

Belongs to the ketol-acid reductoisomerase family. Mg(2+) is required as a cofactor.

The catalysed reaction is (2R)-2,3-dihydroxy-3-methylbutanoate + NADP(+) = (2S)-2-acetolactate + NADPH + H(+). It catalyses the reaction (2R,3R)-2,3-dihydroxy-3-methylpentanoate + NADP(+) = (S)-2-ethyl-2-hydroxy-3-oxobutanoate + NADPH + H(+). Its pathway is amino-acid biosynthesis; L-isoleucine biosynthesis; L-isoleucine from 2-oxobutanoate: step 2/4. The protein operates within amino-acid biosynthesis; L-valine biosynthesis; L-valine from pyruvate: step 2/4. Functionally, involved in the biosynthesis of branched-chain amino acids (BCAA). Catalyzes an alkyl-migration followed by a ketol-acid reduction of (S)-2-acetolactate (S2AL) to yield (R)-2,3-dihydroxy-isovalerate. In the isomerase reaction, S2AL is rearranged via a Mg-dependent methyl migration to produce 3-hydroxy-3-methyl-2-ketobutyrate (HMKB). In the reductase reaction, this 2-ketoacid undergoes a metal-dependent reduction by NADPH to yield (R)-2,3-dihydroxy-isovalerate. The protein is Ketol-acid reductoisomerase (NADP(+)) of Methanosarcina mazei (strain ATCC BAA-159 / DSM 3647 / Goe1 / Go1 / JCM 11833 / OCM 88) (Methanosarcina frisia).